A 318-amino-acid chain; its full sequence is BES1/BZR1 homolog protein 2 (318 aa).

Gly residues predominate over residues 1-13 (MAAGGGGGGGGSS). Disordered stretches follow at residues 1 to 34 (MAAG…RRRR), 84 to 133 (FKPP…PSPS), 166 to 195 (NSAP…PNGG), and 209 to 231 (APSS…CDES). Residues 16–97 (RTPTWKEREN…ASDISGTPTN (82 aa)) form a required for DNA-binding region. Residues 91–101 (ISGTPTNFSTN) are compositionally biased toward polar residues. The segment covering 102–133 (SSIQPSPQSSAFPSPAPSYHGSPVSSSFPSPS) has biased composition (low complexity).

Belongs to the BZR/LAT61 family. In terms of processing, phosphorylated. Phosphorylation increases protein degradation.

The chain is BES1/BZR1 homolog protein 2 (BEH2) from Arabidopsis thaliana (Mouse-ear cress).